A 544-amino-acid polypeptide reads, in one-letter code: Serine/threonine-protein kinase PAK 1 (544 aa).

Residues 1-79 form a disordered region; that stretch reads MSNNGLDVQD…KERPEISLPS (79 aa). At Ser2 the chain carries N-acetylserine. Ser21 is subject to Phosphoserine; by PKB and autocatalysis. At Ser57 the chain carries Phosphoserine; by autocatalysis. The span at 68–79 shows a compositional bias: basic and acidic residues; sequence KEKERPEISLPS. Residues 70–140 form an autoregulatory region region; it reads KERPEISLPS…YNSKKTSNSQ (71 aa). The region spanning 75–88 is the CRIB domain; that stretch reads ISLPSDFEHTIHVG. Residues 75-105 are GTPase-binding; sequence ISLPSDFEHTIHVGFDAVTGEFTGMPEQWAR. Position 84 is a phosphothreonine; by OXSR1 (Thr84). Ser115 carries the post-translational modification Phosphoserine. Phosphotyrosine occurs at positions 131 and 142. Phosphoserine; by autocatalysis occurs at positions 144 and 149. Residues 150–166 show a composition bias toward polar residues; that stretch reads AEDYNSSNTLNVKTVSE. Residues 150 to 195 form a disordered region; that stretch reads AEDYNSSNTLNVKTVSETPAVPPVSEDEDDDDDATPPPVIAPRPEH. Tyr153 is modified (phosphotyrosine; by JAK2). At Ser174 the chain carries Phosphoserine. Positions 174–183 are enriched in acidic residues; the sequence is SEDEDDDDDA. Thr184 carries the post-translational modification Phosphothreonine. Position 198 is a phosphoserine; by autocatalysis (Ser198). Position 200 is a phosphotyrosine; by JAK2 (Tyr200). The residue at position 203 (Ser203) is a Phosphoserine; by autocatalysis. Residues 209 to 250 are disordered; it reads PVTPTRDVATSPISPTENNTTPPDALTRNTEKQKKKPKMSDE. Residues Thr211 and Thr218 each carry the phosphothreonine modification. 2 positions are modified to phosphoserine: Ser219 and Ser222. Polar residues predominate over residues 219–230; it reads SPISPTENNTTP. Phosphothreonine occurs at positions 224, 228, and 229. One can recognise a Protein kinase domain in the interval 269-520; it reads YTRFEKIGQG…AKELLQHQFL (252 aa). An ATP-binding site is contributed by 275–283; sequence IGQGASGTV. Tyr284 carries the phosphotyrosine; by JAK2 modification. Lys298 provides a ligand contact to ATP. Asp388 functions as the Proton acceptor in the catalytic mechanism. Phosphothreonine; by autocatalysis, BRSK2 and PDPK1 is present on Thr422.

The protein belongs to the protein kinase superfamily. STE Ser/Thr protein kinase family. STE20 subfamily. Homodimer in its autoinhibited state. Active as monomer. Interacts with GIT1. Component of cytoplasmic complexes, which also contains PXN, ARHGEF7 and GIT1. Interacts with NISCH. Interacts with DVL1; mediates the formation of a DVL1, MUSK and PAK1 ternary complex involved in AChR clustering. Binds to the caspase-cleaved p110 isoform of CDC2L1 and CDC2L2, p110C, but not the full-length proteins. Interacts with ARHGEF7. Interacts with SCRIB. Interacts with PDPK1. Interacts (via kinase domain) with RAF1. Interacts with NCK1 and NCK2. Interacts with TBCB. Interacts with BRSK2. Interacts tightly with GTP-bound but not GDP-bound CDC42/P21 and RAC1. Interacts with SNAI1. Interacts with CIB1 (via N-terminal region); the interaction is direct, promotes PAK1 activity and occurs in a calcium-dependent manner. Interacts with INPP5K. Interacts with gamma-tubulin. Interacts with RHOU; the interaction promotes PAK1 activation. The cofactor is Mg(2+). In terms of processing, autophosphorylated in trans, meaning that in a dimer, one kinase molecule phosphorylates the other one. Activated by autophosphorylation at Thr-422 in response to a conformation change, triggered by interaction with GTP-bound CDC42 or RAC1. Activated by phosphorylation at Thr-422 by PDPK1. Phosphorylated by JAK2 in response to PRL; this increases PAK1 kinase activity. Phosphorylated at Ser-21 by PKB/AKT; this reduces interaction with NCK1 and association with focal adhesion sites. Activated by phosphorylation at Thr-422 by BRSK2. Upon DNA damage, phosphorylated at Thr-211 and translocates to the nucleoplasm. Phosphorylated at tyrosine residues, which can be enhanced by NTN1. As to expression, expressed predominantly in the brain, with higher expression in neuronal groups associated with motor function, and at lower levels in the spleen.

It localises to the cytoplasm. Its subcellular location is the cell junction. The protein resides in the focal adhesion. It is found in the cell projection. The protein localises to the lamellipodium. It localises to the cell membrane. Its subcellular location is the ruffle membrane. The protein resides in the invadopodium. It is found in the nucleus. The protein localises to the nucleoplasm. It localises to the chromosome. Its subcellular location is the cytoskeleton. The protein resides in the microtubule organizing center. It is found in the centrosome. The catalysed reaction is L-seryl-[protein] + ATP = O-phospho-L-seryl-[protein] + ADP + H(+). It carries out the reaction L-threonyl-[protein] + ATP = O-phospho-L-threonyl-[protein] + ADP + H(+). Phosphorylation of Thr-84 by OXSR1 inhibits activation. Activated by binding small G proteins. Binding of GTP-bound CDC42 or RAC1 to the autoregulatory region releases monomers from the autoinhibited dimer, and enables activation by phosphorylation of Thr-422. Protein kinase involved in intracellular signaling pathways downstream of integrins and receptor-type kinases that plays an important role in cytoskeleton dynamics, in cell adhesion, migration, proliferation, apoptosis, mitosis, and in vesicle-mediated transport processes. Can directly phosphorylate BAD and protects cells against apoptosis. Activated by interaction with CDC42 and RAC1. Functions as a GTPase effector that links the Rho-related GTPases CDC42 and RAC1 to the JNK MAP kinase pathway. Phosphorylates and activates MAP2K1, and thereby mediates activation of downstream MAP kinases. Involved in the reorganization of the actin cytoskeleton, actin stress fibers and of focal adhesion complexes. Phosphorylates the tubulin chaperone TBCB and thereby plays a role in the regulation of microtubule biogenesis and organization of the tubulin cytoskeleton. Plays a role in the regulation of insulin secretion in response to elevated glucose levels. Part of a ternary complex that contains PAK1, DVL1 and MUSK that is important for MUSK-dependent regulation of AChR clustering during the formation of the neuromuscular junction (NMJ). Activity is inhibited in cells undergoing apoptosis, potentially due to binding of CDC2L1 and CDC2L2. Phosphorylates MYL9/MLC2. Phosphorylates RAF1 at 'Ser-338' and 'Ser-339' resulting in: activation of RAF1, stimulation of RAF1 translocation to mitochondria, phosphorylation of BAD by RAF1, and RAF1 binding to BCL2. Phosphorylates SNAI1 at 'Ser-246' promoting its transcriptional repressor activity by increasing its accumulation in the nucleus. In podocytes, promotes NR3C2 nuclear localization. Required for atypical chemokine receptor ACKR2-induced phosphorylation of LIMK1 and cofilin (CFL1) and for the up-regulation of ACKR2 from endosomal compartment to cell membrane, increasing its efficiency in chemokine uptake and degradation. In synapses, seems to mediate the regulation of F-actin cluster formation performed by SHANK3, maybe through CFL1 phosphorylation and inactivation. Plays a role in RUFY3-mediated facilitating gastric cancer cells migration and invasion. In response to DNA damage, phosphorylates MORC2 which activates its ATPase activity and facilitates chromatin remodeling. In neurons, plays a crucial role in regulating GABA(A) receptor synaptic stability and hence GABAergic inhibitory synaptic transmission through its role in F-actin stabilization. In hippocampal neurons, necessary for the formation of dendritic spines and excitatory synapses; this function is dependent on kinase activity and may be exerted by the regulation of actomyosin contractility through the phosphorylation of myosin II regulatory light chain (MLC). Along with GIT1, positively regulates microtubule nucleation during interphase. Phosphorylates FXR1, promoting its localization to stress granules and activity. Phosphorylates ILK on 'Thr-173' and 'Ser-246', promoting nuclear export of ILK. The protein is Serine/threonine-protein kinase PAK 1 of Rattus norvegicus (Rat).